We begin with the raw amino-acid sequence, 142 residues long: Small ribosomal subunit protein uS12 (142 aa).

The protein belongs to the universal ribosomal protein uS12 family.

This Tetrahymena thermophila protein is Small ribosomal subunit protein uS12.